Consider the following 146-residue polypeptide: Angiogenin (146 aa).

The first 24 residues, 1 to 24 (MAMSLCPLLLVFVLGLGLTPPSLA), serve as a signal peptide directing secretion. Glutamine 25 is subject to Pyrrolidone carboxylic acid. The active-site Proton acceptor is histidine 37. Arginine 45 contributes to the tRNA binding site. 3 disulfide bridges follow: cysteine 50/cysteine 105, cysteine 63/cysteine 116, and cysteine 81/cysteine 131. A Nucleolar localization signal motif is present at residues 55 to 59 (VRRHL). TRNA-binding residues include cysteine 105 and isoleucine 127. The Proton donor role is filled by histidine 138.

The protein belongs to the pancreatic ribonuclease family. In terms of assembly, homodimer. Interacts with RNH1; inhibiting ANG ribonuclease activity. Interacts with PCNA.

The protein resides in the secreted. Its subcellular location is the nucleus. It is found in the nucleolus. It localises to the cytoplasm. The protein localises to the stress granule. With respect to regulation, has weak tRNA ribonuclease activity by itself due to partial autoinhibition by its C-terminus, which folds into a short alpha-helix that partially occludes the substrate-binding site. In absence of stress, the ribonuclease activity is inhibited by RNH1 in the cytoplasm. In response to stress, dissociates from RNH1 in the cytoplasm and associates with cytoplasmic ribosomes with vacant A-sites: ribosomes directly activate the tRNA ribonuclease activity of ANG by refolding the C-terminal alpha-helix. In response to stress, the angiogenic activity of ANG is inhibited by RNH1 in the nucleus. Its function is as follows. Secreted ribonuclease that can either promote or restrict cell proliferation of target cells, depending on the context. Endocytosed in target cells via its receptor PLXNB2 and translocates to the cytoplasm or nucleus. Under stress conditions, localizes to the cytoplasm and promotes the assembly of stress granules (SGs): specifically cleaves a subset of tRNAs within anticodon loops to produce tRNA-derived stress-induced fragments (tiRNAs), resulting in translation repression and inhibition of cell proliferation. tiRNas also prevent formation of apoptosome, thereby promoting cell survival. Preferentially cleaves RNAs between a pyrimidine and an adenosine residue, suggesting that it cleaves the anticodon loop of tRNA(Ala) (32-UUAGCAU-38) after positions 33 and 36. Cleaves a subset of tRNAs, including tRNA(Ala), tRNA(Glu), tRNA(Gly), tRNA(Lys), tRNA(Val), tRNA(His), tRNA(Asp) and tRNA(Sec). Under growth conditions and in differentiated cells, translocates to the nucleus and stimulates ribosomal RNA (rRNA) transcription, including that containing the initiation site sequences of 45S rRNA, thereby promoting cell growth and proliferation. Angiogenin induces vascularization of normal and malignant tissues via its ability to promote rRNA transcription. Involved in hematopoietic stem and progenitor cell (HSPC) growth and survival by promoting rRNA transcription in growth conditions and inhibiting translation in response to stress, respectively. Mediates the crosstalk between myeloid and intestinal epithelial cells to protect the intestinal epithelial barrier integrity: secreted by myeloid cells and promotes intestinal epithelial cells proliferation and survival. Also mediates osteoclast-endothelial cell crosstalk in growing bone: produced by osteoclasts and protects the neighboring vascular cells against senescence by promoting rRNA transcription. This Equus caballus (Horse) protein is Angiogenin (ANG).